The sequence spans 563 residues: Arginine--tRNA ligase (563 aa).

Positions Pro122–His132 match the 'HIGH' region motif.

It belongs to the class-I aminoacyl-tRNA synthetase family. Monomer.

It is found in the cytoplasm. The catalysed reaction is tRNA(Arg) + L-arginine + ATP = L-arginyl-tRNA(Arg) + AMP + diphosphate. This Ligilactobacillus salivarius (strain UCC118) (Lactobacillus salivarius) protein is Arginine--tRNA ligase.